The chain runs to 355 residues: 3-isopropylmalate dehydrogenase (355 aa).

Positions 90, 100, 128, and 222 each coordinate substrate. Residues aspartate 222, aspartate 246, and aspartate 250 each coordinate Mg(2+). 280–292 is an NAD(+) binding site; that stretch reads GSAPDIAGKGIAN.

It belongs to the isocitrate and isopropylmalate dehydrogenases family. LeuB type 1 subfamily. As to quaternary structure, homodimer. Mg(2+) is required as a cofactor. Requires Mn(2+) as cofactor.

The protein resides in the cytoplasm. The catalysed reaction is (2R,3S)-3-isopropylmalate + NAD(+) = 4-methyl-2-oxopentanoate + CO2 + NADH. It functions in the pathway amino-acid biosynthesis; L-leucine biosynthesis; L-leucine from 3-methyl-2-oxobutanoate: step 3/4. In terms of biological role, catalyzes the oxidation of 3-carboxy-2-hydroxy-4-methylpentanoate (3-isopropylmalate) to 3-carboxy-4-methyl-2-oxopentanoate. The product decarboxylates to 4-methyl-2 oxopentanoate. This Burkholderia multivorans (strain ATCC 17616 / 249) protein is 3-isopropylmalate dehydrogenase.